The primary structure comprises 347 residues: MLWIDKYKPTSLDKMDYHNDISINLKNMIKSGDFPHLLVYGPSGAGKKTRILAVLQEIYGPNALKLKIDHRTFKHPTSSKNIQITTISSHYHIEINPGEAGSYDRVVIQTIIKEIAQSPPIDSGSLGAFKIVILNEVDKLSKDAQHALRRTMEKYATFCRLILCCDSTAKVIDPIKSRCLGIRVPAPSQEEIEKVLAKVATAEKFDLPSKLAVNVAKQSGGNLRYALMLLESQKAKQYPFQSTELPLLDWENYISQIVKDCFEEQSPARLSIVRGKLYELLGHCIPPELIFKTLLLEIFKKLDHNMKFEIIHWASYYEHRSQIGSKPIFHLEAFIAKFMSVYKKYNQ.

This sequence belongs to the activator 1 small subunits family. As to quaternary structure, heteropentamer of various rfc subunits that forms a complex (RFC) with PCNA in the presence of ATP.

Its subcellular location is the nucleus. Its function is as follows. The elongation of primed DNA templates by DNA polymerase delta and epsilon requires the action of the accessory proteins PCNA and activator 1. The polypeptide is Probable replication factor C subunit 3 (rfc3) (Dictyostelium discoideum (Social amoeba)).